The chain runs to 172 residues: Large ribosomal subunit protein uL10 (172 aa).

Belongs to the universal ribosomal protein uL10 family. As to quaternary structure, part of the ribosomal stalk of the 50S ribosomal subunit. The N-terminus interacts with L11 and the large rRNA to form the base of the stalk. The C-terminus forms an elongated spine to which L12 dimers bind in a sequential fashion forming a multimeric L10(L12)X complex.

Its function is as follows. Forms part of the ribosomal stalk, playing a central role in the interaction of the ribosome with GTP-bound translation factors. This is Large ribosomal subunit protein uL10 from Methylorubrum extorquens (strain CM4 / NCIMB 13688) (Methylobacterium extorquens).